A 511-amino-acid chain; its full sequence is Glucose-6-phosphate 1-dehydrogenase (511 aa).

NADP(+) is bound by residues 29–36 (GASGDLAK), Arg63, and Lys164. Residues Lys164, 194–198 (HYLGK), Glu232, and Asp251 each bind D-glucose 6-phosphate. His256 functions as the Proton acceptor in the catalytic mechanism. Lys347 is an NADP(+) binding site. Lys350 contacts D-glucose 6-phosphate. Lys356, Arg360, and Arg382 together coordinate NADP(+). D-glucose 6-phosphate is bound at residue Gln384. NADP(+) contacts are provided by residues 390 to 392 (YIK), 410 to 412 (DLT), and Arg477.

It belongs to the glucose-6-phosphate dehydrogenase family.

The enzyme catalyses D-glucose 6-phosphate + NADP(+) = 6-phospho-D-glucono-1,5-lactone + NADPH + H(+). Its pathway is carbohydrate degradation; pentose phosphate pathway; D-ribulose 5-phosphate from D-glucose 6-phosphate (oxidative stage): step 1/3. In terms of biological role, catalyzes the rate-limiting step of the oxidative pentose-phosphate pathway, which represents a route for the dissimilation of carbohydrates besides glycolysis. The main function of this enzyme is to provide reducing power (NADPH) and pentose phosphates for fatty acid and nucleic acid synthesis. The polypeptide is Glucose-6-phosphate 1-dehydrogenase (gsdA) (Emericella nidulans (strain FGSC A4 / ATCC 38163 / CBS 112.46 / NRRL 194 / M139) (Aspergillus nidulans)).